Consider the following 218-residue polypeptide: MDQDVLKKQVAEAALRFVPEGDIIGVGTGSTANFFIDALATLKDRIKGTVASSEATAERLKQHGIEVFSLNDVGSLSVYVDGADEVNQHREMIKGGGGALTREKIVAAMAKEFICIVDGSKQVNRLGAFPLPIEVIPMARSYVARKLVALGGQPQYREGFLTDNGNIILDVHNLDISNPIELETTLNNIVGVVTNGLFAKRPADIVLVGEKSGAVNQY.

Substrate-binding positions include 28–31 (TGST), 81–84 (DGAD), and 94–97 (KGGG). The active-site Proton acceptor is the glutamate 103. Lysine 121 contacts substrate.

It belongs to the ribose 5-phosphate isomerase family. In terms of assembly, homodimer.

The catalysed reaction is aldehydo-D-ribose 5-phosphate = D-ribulose 5-phosphate. It functions in the pathway carbohydrate degradation; pentose phosphate pathway; D-ribose 5-phosphate from D-ribulose 5-phosphate (non-oxidative stage): step 1/1. Catalyzes the reversible conversion of ribose-5-phosphate to ribulose 5-phosphate. In Alcanivorax borkumensis (strain ATCC 700651 / DSM 11573 / NCIMB 13689 / SK2), this protein is Ribose-5-phosphate isomerase A.